Here is a 383-residue protein sequence, read N- to C-terminus: Outer membrane protein Omp-EA (383 aa).

The first 21 residues, 1 to 21 (MKRNILAVLIPALLAAGAANA), serve as a signal peptide directing secretion. At 22 to 30 (AEIYNKDGN) the chain is on the periplasmic side. A beta stranded transmembrane segment spans residues 31–45 (KLDLYGKVKAMRYLS). The Extracellular portion of the chain corresponds to 46–58 (DADSNASNNADKS). A beta stranded membrane pass occupies residues 59-70 (YTRIGFKGQTLI). Over 71 to 74 (NDQL) the chain is Periplasmic. The beta stranded transmembrane segment at 75-86 (TGYGQWEYNFSL) threads the bilayer. Residues 87–100 (SNSESSSDAQSGNK) are Extracellular-facing. The chain crosses the membrane as a beta stranded span at residues 101–109 (TRLGFAGLK). Residues 110–112 (LKD) lie on the Periplasmic side of the membrane. A beta stranded transmembrane segment spans residues 113 to 122 (YGSVDYGRNY). Over 123–155 (GVIYDVEAFTDMMPEFGATGYTRTDTYMLTRGN) the chain is Extracellular. The beta stranded transmembrane segment at 156–164 (SMLTWRNSD) threads the bilayer. At 165–171 (FFGLVDG) the chain is on the periplasmic side. The beta stranded transmembrane segment at 172–178 (LKIALQY) threads the bilayer. Residues 179–198 (QGKNEGSGTRATNVSNGDGY) lie on the Extracellular side of the membrane. Residues 199–206 (GASLSYKI) form a beta stranded membrane-spanning segment. The Periplasmic portion of the chain corresponds to 207 to 209 (VEG). The chain crosses the membrane as a beta stranded span at residues 210–219 (LTINGAMSSS). Topologically, residues 220-243 (NRLNANSASSTTSQKMAAYGSGGR) are extracellular. A beta stranded transmembrane segment spans residues 244–252 (AEAWATGLK). Topologically, residues 253-258 (YDANGV) are periplasmic. A beta stranded transmembrane segment spans residues 259-268 (YLAGTYAETR). Over 269–296 (NTNPFSGASYTFAGNSTATAVSGYANKV) the chain is Extracellular. A beta stranded transmembrane segment spans residues 297 to 307 (QNTELVAQYQF). The Periplasmic segment spans residues 308–310 (DSG). The chain crosses the membrane as a beta stranded span at residues 311 to 319 (LRPSLAYVQ). The Extracellular segment spans residues 320 to 335 (TKAKDIENGIGDADLS). Residues 336–346 (KFVDVAATYYF) form a beta stranded membrane-spanning segment. Topologically, residues 347–351 (NKNMS) are periplasmic. Residues 352–361 (AFVDYKVNLL) form a beta stranded membrane-spanning segment. The Extracellular segment spans residues 362–372 (SDSNKLHLNTD). A beta stranded membrane pass occupies residues 373-383 (DIVAVGLVYQF).

It belongs to the Gram-negative porin family. In terms of assembly, homotrimer.

The protein resides in the cell outer membrane. Its function is as follows. May play an important role in maintaining pathogenicity in plants. The chain is Outer membrane protein Omp-EA (omp-EA) from Erwinia amylovora (Fire blight bacteria).